A 317-amino-acid chain; its full sequence is Probable cell division protein WhiA (317 aa).

Residues 281 to 314 constitute a DNA-binding region (H-T-H motif); sequence SLKELGKMLEPPVGKSGVNHRLRKIEKIAEELRK.

This sequence belongs to the WhiA family.

In terms of biological role, involved in cell division and chromosome segregation. The sequence is that of Probable cell division protein WhiA from Clostridium acetobutylicum (strain ATCC 824 / DSM 792 / JCM 1419 / IAM 19013 / LMG 5710 / NBRC 13948 / NRRL B-527 / VKM B-1787 / 2291 / W).